The primary structure comprises 1029 residues: MADKTPGGSQKASSKNRSSDVHSSGSSDAHMDASGPSDSDMPSRTRPKSPRKHNYRNESSRESLCDSPHQNLSRPLLENKLKAFSIGKMSTAKRTLSKKEQEELKKKEDEKAAAEIYEEFLAAFEGSDGNKVKTFVRGGVVNAAKDEHETDEKRGKIYKPSSRFADQKNPPNQSSNERPPSLLVIETKKPPLKKGEKEKKKSNLELFKEELKQIQEERDERHKTKGRLSRFEPPQSDSDGQRRSMDVPSRRNRSSGVLDDYAPGSHDVGDPSTTNLYLGNINPQMNEEMLCQEFGRFGPLASVKIMWPRTDEERARERNCGFVAFMNRRDAERALKNLNGKMIMSFEMKLGWGKAVPIPPHPIYIPPSMMEHTLPPPPSGLPFNAQPRERLKNPNAPMLPPPKNKEDFEKTLSQAIVKVVIPTERNLLALIHRMIEFVVREGPMFEAMIMNREINNPMFRFLFENQTPAHVYYRWKLYSILQGDSPTKWRTEDFRMFKNGSFWRPPPLNPYLHGMSEEQETEAFVEEPSKKGALKEEQRDKLEEILRGLTPRKNDIGDAMVFCLNNAEAAEEIVDCITESLSILKTPLPKKIARLYLVSDVLYNSSAKVANASYYRKFFETKLCQIFSDLNATYRTIQGHLQSENFKQRVMTCFRAWEDWAIYPEPFLIKLQNIFLGLVNIIEEKETEDVPDDLDGAPIEEELDGAPLEDVDGIPIDATPIDDLDGVPIKSLDDDLDGVPLDATEDSKKNEPIFKVAPSKWEAVDESELEAQAVTTSKWELFDQHEESEEEENQNQEEESEDEEDTQSSKSEEHHLYSNPVREEATESKFSKYSEMSEEKRAKLREIELKVMKFQDELESGKRPKKPGQSFQEQVEHYRDKLLQREKEKELERERERDKKDKEKLESRSKDKKEKDECTPTRKERKRRHSTSPSPSRSSSGRRVKSPSPKSERSERSERSHKESSRSRSSHKDSPRDASKKAKRSPSGSRTPKRSRRSRSRSPKKSGKKSRSQSRSPHRSHKKSKKNKH.

Disordered regions lie at residues 1–110 (MADK…KEDE) and 141–273 (VNAA…DPST). Ala-2 carries the N-acetylalanine modification. Over residues 7–16 (GGSQKASSKN) the composition is skewed to polar residues. Residues 45-54 (TRPKSPRKHN) show a composition bias toward basic residues. A compositionally biased stretch (basic and acidic residues) spans 55–64 (YRNESSRESL). Ser-67 carries the phosphoserine modification. A Glycyl lysine isopeptide (Lys-Gly) (interchain with G-Cter in SUMO2) cross-link involves residue Lys-80. Positions 92–121 (AKRTLSKKEQEELKKKEDEKAAAEIYEEFL) form a coiled coil. Basic and acidic residues-rich tracts occupy residues 97 to 110 (SKKE…KEDE) and 144 to 155 (AKDEHETDEKRG). Glycyl lysine isopeptide (Lys-Gly) (interchain with G-Cter in SUMO2) cross-links involve residues Lys-145 and Lys-168. Over residues 169 to 178 (NPPNQSSNER) the composition is skewed to polar residues. The span at 186–222 (ETKKPPLKKGEKEKKKSNLELFKEELKQIQEERDERH) shows a compositional bias: basic and acidic residues. A coiled-coil region spans residues 192 to 232 (LKKGEKEKKKSNLELFKEELKQIQEERDERHKTKGRLSRFE). Ser-202 carries the post-translational modification Phosphoserine. Lys-208 is covalently cross-linked (Glycyl lysine isopeptide (Lys-Gly) (interchain with G-Cter in SUMO2)). Residue Ser-236 is modified to Phosphoserine. Residues 239 to 249 (DGQRRSMDVPS) show a composition bias toward basic and acidic residues. Positions 274 to 355 (TNLYLGNINP…FEMKLGWGKA (82 aa)) constitute an RRM domain. The stretch at 430-473 (LIHRMIEFVVREGPMFEAMIMNREINNPMFRFLFENQTPAHVYY) is one SURP motif repeat. Residue Ser-485 is modified to Phosphoserine. The CID domain occupies 534-679 (LKEEQRDKLE…KLQNIFLGLV (146 aa)). A disordered region spans residues 704–729 (DGAPLEDVDGIPIDATPIDDLDGVPI). Thr-719 is subject to Phosphothreonine. Residues Lys-748 and Lys-749 each participate in a glycyl lysine isopeptide (Lys-Gly) (interchain with G-Cter in SUMO2) cross-link. An N6-acetyllysine; alternate modification is found at Lys-760. Residue Lys-760 forms a Glycyl lysine isopeptide (Lys-Gly) (interchain with G-Cter in SUMO2); alternate linkage. 2 disordered regions span residues 778-841 (KWEL…EEKR) and 855-1029 (QDEL…KNKH). Positions 786-806 (EESEEEENQNQEEESEDEEDT) are enriched in acidic residues. Ser-788, Ser-800, and Ser-811 each carry phosphoserine. Composition is skewed to basic and acidic residues over residues 810–841 (KSEE…EEKR) and 874–922 (QVEH…TPTR). Residues Lys-829 and Lys-832 each participate in a glycyl lysine isopeptide (Lys-Gly) (interchain with G-Cter in SUMO2) cross-link. Positions 837-915 (SEEKRAKLRE…ESRSKDKKEK (79 aa)) form a coiled coil. Thr-931 carries the phosphothreonine modification. Residues Ser-946 and Ser-948 each carry the phosphoserine modification. Over residues 950 to 980 (KSERSERSERSHKESSRSRSSHKDSPRDASK) the composition is skewed to basic and acidic residues. Basic residues predominate over residues 991–1029 (TPKRSRRSRSRSPKKSGKKSRSQSRSPHRSHKKSKKNKH).

The protein belongs to the splicing factor SR family. Interacts with ERBB4.

The protein localises to the nucleus. This Mus musculus (Mouse) protein is U2 snRNP-associated SURP motif-containing protein (U2surp).